We begin with the raw amino-acid sequence, 186 residues long: Glutathione-independent glyoxalase DJR-1.2 (186 aa).

Active-site residues include Glu-20, Cys-105, and His-124.

This sequence belongs to the peptidase C56 family. DJ-1 subfamily. As to expression, expressed in various tissues, including pharyngeal muscles, pharynx-intestinal valve, ventral nerve cord, spermatheca, rectal gland, inner labial (IL) cells of head neurons, phasmid (PHA/PHB) neurons in tail and supporting sheath/socket cells, as well as in head mesodermal cells (HMC), excretory canals and coelomocytes.

The protein localises to the cytoplasm. The catalysed reaction is methylglyoxal + H2O = (R)-lactate + H(+). In terms of biological role, catalyzes the conversion of methylglyoxal (MG) or glyoxal (GO) to D-lactate or glycolic acid respectively in a single glutathione (GSH)-independent step. May play a role in detoxifying endogenously produced glyoxals. Involved in protection against glyoxal-induced cell death. Protects dopaminergic neurons from glyoxal-dependent neuronal degeneration. This chain is Glutathione-independent glyoxalase DJR-1.2, found in Caenorhabditis elegans.